The primary structure comprises 368 residues: Anaphase-promoting complex subunit MND2 (368 aa).

2 disordered regions span residues 140–167 and 286–336; these read AQNAEGNNEEDFRQHDSREEDPRNNGSI and RNPY…GITP. Over residues 149 to 162 the composition is skewed to basic and acidic residues; it reads EDFRQHDSREEDPR. Ser293 carries the phosphoserine modification.

It belongs to the APC15 family. The APC/C is composed of at least 13 subunits that stay tightly associated throughout the cell cycle: APC1, APC2, APC4, APC5, APC9, APC11, CDC16, CDC23, CDC26, CDC27, DOC1, MND2 and SWM1. MND2 interacts directly with APC1, APC5 and CDC23.

It participates in protein modification; protein ubiquitination. Component of the anaphase promoting complex/cyclosome (APC/C), a cell cycle-regulated E3 ubiquitin-protein ligase complex that controls progression through mitosis and the G1 phase of the cell cycle. The APC/C is thought to confer substrate specificity and, in the presence of ubiquitin-conjugating E2 enzymes, it catalyzes the formation of protein-ubiquitin conjugates that are subsequently degraded by the 26S proteasome. In early mitosis, the APC/C is activated by CDC20 and targets securin PDS1, the B-type cyclin CLB5, and other anaphase inhibitory proteins for proteolysis, thereby triggering the separation of sister chromatids at the metaphase-to-anaphase transition. In late mitosis and in G1, degradation of CLB5 allows activation of the APC/C by CDH1, which is needed to destroy CDC20 and the B-type cyclin CLB2 to allow exit from mitosis and creating the low CDK state necessary for cytokinesis and for reforming prereplicative complexes in G1 prior to another round of replication. The sequence is that of Anaphase-promoting complex subunit MND2 (MND2) from Saccharomyces cerevisiae (strain ATCC 204508 / S288c) (Baker's yeast).